The chain runs to 465 residues: Ras-like GTPase YcjX (465 aa).

Residues 26–33 carry the Walker A motif motif; that stretch reads GLSRSGKT. GTP is bound by residues serine 28, glycine 31, lysine 32, threonine 33, alanine 34, tryptophan 95, threonine 99, and arginine 100. The GDP site is built by glycine 31, lysine 32, threonine 33, alanine 34, tryptophan 95, and threonine 99. Lysine 249 carries the post-translational modification N6-acetyllysine. Lysine 338, aspartate 340, histidine 341, and valine 380 together coordinate GTP. Residues lysine 338, aspartate 340, histidine 341, and valine 380 each contribute to the GDP site.

This sequence to H.influenzae HI_1637. As to quaternary structure, monomer in solution. The cofactor is Mg(2+).

It catalyses the reaction GTP + H2O = GDP + phosphate + H(+). With respect to regulation, alternates between an inactive form bound to GDP and an active form bound to GTP. Likely activated by a guanine nucleotide-exchange factor (GEF). Its function is as follows. Binds GTP and GDP. Has intrinsic GTPase activity. Does not hydrolyze ATP. May act as a transducer of stress responses. In Escherichia coli (strain K12), this protein is Ras-like GTPase YcjX (ycjX).